Reading from the N-terminus, the 103-residue chain is Cell division protein FtsB (103 aa).

Topologically, residues 1–3 (MGK) are cytoplasmic. The helical transmembrane segment at 4–21 (LTLLLLAILVWLQYSLWF) threads the bilayer. Topologically, residues 22–103 (GKNGIHDYTR…RAQSAGQNNR (82 aa)) are periplasmic. A coiled-coil region spans residues 31–71 (RVNDDVAAQQATNAKLKARNDQLFAEIDDLNGGQEALEERA).

Belongs to the FtsB family. In terms of assembly, part of a complex composed of FtsB, FtsL and FtsQ.

It is found in the cell inner membrane. Essential cell division protein. May link together the upstream cell division proteins, which are predominantly cytoplasmic, with the downstream cell division proteins, which are predominantly periplasmic. The protein is Cell division protein FtsB of Escherichia coli O157:H7.